The primary structure comprises 470 residues: Aspartyl aminopeptidase (470 aa).

H92 contributes to the Zn(2+) binding site. Residue H166 participates in substrate binding. Zn(2+) is bound at residue D263. Position 299 (E299) interacts with substrate. Residues E300 and D343 each contribute to the Zn(2+) site. Substrate is bound by residues D343, H346, K371, and Y378. Zn(2+) is bound at residue H437.

It belongs to the peptidase M18 family. In terms of assembly, tetrahedron-shaped homododecamer built from six homodimers. Zn(2+) is required as a cofactor. In terms of tissue distribution, expressed in various cell types and tissues including the pharynx, neurons, body wall muscle, intestine and vulva.

Its subcellular location is the cytoplasm. It localises to the cytosol. The enzyme catalyses Release of an N-terminal aspartate or glutamate from a peptide, with a preference for aspartate.. In terms of biological role, aminopeptidase with specificity towards an acidic amino acid at the N-terminus. Plays a role in membrane trafficking and is specifically involved in the recycling and degradation of endocytic cargo. The chain is Aspartyl aminopeptidase from Caenorhabditis elegans.